The chain runs to 415 residues: Histidine--tRNA ligase (415 aa).

This sequence belongs to the class-II aminoacyl-tRNA synthetase family. Homodimer.

Its subcellular location is the cytoplasm. The enzyme catalyses tRNA(His) + L-histidine + ATP = L-histidyl-tRNA(His) + AMP + diphosphate + H(+). In Clostridium botulinum (strain Langeland / NCTC 10281 / Type F), this protein is Histidine--tRNA ligase.